A 115-amino-acid chain; its full sequence is MARVKRGNIARKRRNKILNLAKGFRGGNKNLFRTANQRVMKALCNAYRDRRRRKRDFRRLWISRINASARINGTNYSKLINGMKNSEIIINRKMLAQLALSDPKCFEKIVSSVSN.

It belongs to the bacterial ribosomal protein bL20 family.

Functionally, binds directly to 23S ribosomal RNA and is necessary for the in vitro assembly process of the 50S ribosomal subunit. It is not involved in the protein synthesizing functions of that subunit. The sequence is that of Large ribosomal subunit protein bL20 from Prochlorococcus marinus (strain MIT 9215).